A 610-amino-acid polypeptide reads, in one-letter code: Zinc metalloproteinase-disintegrin-like 4a (610 aa).

The signal sequence occupies residues 1 to 20 (MIQVLLVTISLAVFPYQGSS). The propeptide occupies 21 to 189 (VILESGNVND…KKASQSNLTP (169 aa)). In terms of domain architecture, Peptidase M12B spans 199–395 (KYVKLFLVAD…NMPQCILKKP (197 aa)). An N-linked (GlcNAc...) asparagine glycan is attached at N218. Position 286 (D286) interacts with Ca(2+). 3 cysteine pairs are disulfide-bonded: C310-C390, C350-C374, and C352-C357. H335 serves as a coordination point for Zn(2+). E336 is a catalytic residue. H339 and H345 together coordinate Zn(2+). Residues C390, V405, N408, F410, E412, E415, and D418 each coordinate Ca(2+). In terms of domain architecture, Disintegrin spans 403–488 (PAVCGNYFVE…AECTDSFQRN (86 aa)). Intrachain disulfides connect C406-C435, C417-C430, C419-C425, C429-C452, C443-C449, C448-C474, C461-C481, C468-C499, C492-C504, C511-C561, C526-C572, C539-C549, C556-C598, and C592-C603. The D/ECD-tripeptide motif lies at 467–469 (ECD).

It belongs to the venom metalloproteinase (M12B) family. P-III subfamily. Requires Zn(2+) as cofactor. In terms of tissue distribution, expressed by the venom gland.

The protein resides in the secreted. Its function is as follows. Snake venom metalloproteinase that impairs hemostasis in the envenomed animal. The chain is Zinc metalloproteinase-disintegrin-like 4a from Crotalus adamanteus (Eastern diamondback rattlesnake).